A 230-amino-acid chain; its full sequence is Type II restriction enzyme SinI (230 aa).

The catalysed reaction is Endonucleolytic cleavage of DNA to give specific double-stranded fragments with terminal 5'-phosphates.. In terms of biological role, a P subtype restriction enzyme that recognizes the double-stranded sequence 5'-GGWCC-3' and cleaves after G-1. This Salmonella infantis protein is Type II restriction enzyme SinI (sinIR).